Consider the following 207-residue polypeptide: Ras-related protein Rab-8B (207 aa).

Residues serine 17, glycine 18, valine 19, glycine 20, lysine 21, threonine 22, cysteine 23, threonine 35, serine 39, and threonine 40 each contribute to the GTP site. Threonine 22 serves as a coordination point for Mg(2+). Short sequence motifs (switch) lie at residues 31–45 (DAFN…GIDF) and 63–80 (DTAG…YYRG). The Mg(2+) site is built by threonine 40 and aspartate 63. Residue glycine 66 participates in GTP binding. Position 72 is a phosphothreonine (threonine 72). GTP-binding residues include asparagine 121, lysine 122, aspartate 124, alanine 152, and lysine 153. Position 180 is a phosphoserine (serine 180). At cysteine 204 the chain carries Cysteine methyl ester. Cysteine 204 is lipidated: S-geranylgeranyl cysteine. Positions 205-207 (LLL) are cleaved as a propeptide — removed in mature form.

It belongs to the small GTPase superfamily. Rab family. As to quaternary structure, associated with actin, delta-catenin and alpha and beta tubulins. Interacts with OTOF. Interacts with PEX5R. Interacts with RAB3IP. Interacts with VIM. Interacts with CDH1. Interacts with MICALL2. Interacts with GDI1, GDI2, CHML and CHM; phosphorylation at Thr-72 disrupts these interactions. Interacts with MICAL1. Mg(2+) is required as a cofactor. Post-translationally, phosphorylation of Thr-72 in the switch II region by LRRK2 prevents the association of RAB regulatory proteins, including CHM, CHML and RAB GDP dissociation inhibitors GDI1 and GDI2.

Its subcellular location is the cell membrane. The protein resides in the cytoplasmic vesicle. It is found in the phagosome membrane. It localises to the endosome membrane. The enzyme catalyses GTP + H2O = GDP + phosphate + H(+). With respect to regulation, regulated by guanine nucleotide exchange factors (GEFs) including RAB3IP/RABIN8 which promotes the exchange of bound GDP for free GTP. Regulated by GTPase activating proteins (GAPs) which increase the GTP hydrolysis activity. Inhibited by GDP dissociation inhibitors (GDIs). Functionally, the small GTPases Rab are key regulators of intracellular membrane trafficking, from the formation of transport vesicles to their fusion with membranes. Rabs cycle between an inactive GDP-bound form and an active GTP-bound form that is able to recruit to membranes different sets of downstream effectors directly responsible for vesicle formation, movement, tethering and fusion. RAB8B may be involved in polarized vesicular trafficking and neurotransmitter release. May participate in cell junction dynamics in Sertoli cells. May also participate in the export of a subset of neosynthesized proteins through a Rab8-Rab10-Rab11-dependent endososomal export route. The chain is Ras-related protein Rab-8B (RAB8B) from Pongo abelii (Sumatran orangutan).